The sequence spans 104 residues: Nucleoid-associated protein LSL_1227 (104 aa).

Positions 1–19 (MMMRGMNMQSMMKQMQKLQ) are enriched in low complexity. The disordered stretch occupies residues 1–24 (MMMRGMNMQSMMKQMQKLQKNMKK).

The protein belongs to the YbaB/EbfC family. Homodimer.

The protein localises to the cytoplasm. Its subcellular location is the nucleoid. Its function is as follows. Binds to DNA and alters its conformation. May be involved in regulation of gene expression, nucleoid organization and DNA protection. The chain is Nucleoid-associated protein LSL_1227 from Ligilactobacillus salivarius (strain UCC118) (Lactobacillus salivarius).